The primary structure comprises 134 residues: Secreted RxLR effector protein 1 (134 aa).

An N-terminal signal peptide occupies residues 1–22 (MFCRSPLVAVILLVLATHIVLA). The tract at residues 32 to 60 (SETVPSDSSQTTRKSTRRTTSVDNKRRLR) is disordered. Low complexity predominate over residues 37 to 52 (SDSSQTTRKSTRRTTS). The RxLR-dEER signature appears at 57 to 79 (RRLRQQIMGKDGPVVNDVHAEER).

Belongs to the RxLR effector family.

It is found in the secreted. Its subcellular location is the host nucleus. Effector that acts as a broad suppressor of cell death to interrupt plant immunity. Inhibits cell death induced by cell death-inducing proteins, including the PAMP elicitor INF1 from P.infestans. The chain is Secreted RxLR effector protein 1 from Plasmopara viticola (Downy mildew of grapevine).